We begin with the raw amino-acid sequence, 187 residues long: Putative manganese efflux pump MntP (187 aa).

The next 6 membrane-spanning stretches (helical) occupy residues 3 to 23, 35 to 55, 56 to 76, 107 to 127, 129 to 149, and 166 to 186; these read FYSL…VSLC, HYLI…TIGY, FIGI…AFIL, LALA…FAFL, VNLL…CIIA, and LLGG…HLFF.

This sequence belongs to the MntP (TC 9.B.29) family.

The protein localises to the cell inner membrane. Probably functions as a manganese efflux pump. This chain is Putative manganese efflux pump MntP, found in Campylobacter jejuni subsp. doylei (strain ATCC BAA-1458 / RM4099 / 269.97).